A 538-amino-acid polypeptide reads, in one-letter code: Furcatin hydrolase (538 aa).

Residues 1-66 (MATITTLASS…NFNKDNWLAS (66 aa)) constitute a chloroplast transit peptide. The disordered stretch occupies residues 18-37 (SFPGGSSRKPKKDNLSIKPP). A beta-D-glucoside-binding positions include Gln-88, His-192, and 237–238 (NE). The active-site Proton donor is Glu-238. A disulfide bridge links Cys-257 with Cys-260. A beta-D-glucoside contacts are provided by residues Tyr-376, Glu-447, Trp-494, 501-502 (EW), and Phe-510. Glu-447 acts as the Nucleophile in catalysis.

This sequence belongs to the glycosyl hydrolase 1 family. Expressed in young and mature leaves, but not in fruit and stem.

The protein localises to the plastid. Its subcellular location is the chloroplast. It catalyses the reaction 7-[beta-D-apiofuranosyl-(1-&gt;6)-beta-D-glucopyranosyloxy]isoflavonoid + H2O = a 7-hydroxyisoflavonoid + beta-D-apiofuranosyl-(1-&gt;6)-D-glucose.. Its function is as follows. Disaccharide-specific acuminosidase, hydrolyzes the beta-glycosidic bond between p-allylphenol and acuminose with retention of anomeric configuration. Has highest activity towards furcatin, and lower activity towards beta-primeverosides and beta-vicianoside. Has very low activity towards beta-gentobiosides. This Viburnum furcatum (Scarlet leaved viburnum) protein is Furcatin hydrolase.